Here is a 393-residue protein sequence, read N- to C-terminus: Serpin-Z4 (393 aa).

Residues 342–366 are RCL; sequence GTEAAAVSVASMTKDMLLMGDFVAD.

Belongs to the serpin family.

Probable serine protease inhibitor. The polypeptide is Serpin-Z4 (Arabidopsis thaliana (Mouse-ear cress)).